The following is a 485-amino-acid chain: WD repeat-containing protein 13 (485 aa).

M1 bears the N-acetylmethionine mark. Residues S70, S74, and S79 each carry the phosphoserine modification. At R114 the chain carries Asymmetric dimethylarginine; alternate. An Omega-N-methylarginine; alternate modification is found at R114. WD repeat units lie at residues 162–202, 208–246, 250–290, 295–335, 341–389, 394–438, and 444–482; these read GMYH…LCQL, TVLR…IWAS, RCIR…VMNI, KVKG…LFDM, TKAK…VVDN, QLKR…FFDV, and AAVN…VWRR.

As to expression, widely expressed.

It is found in the nucleus. In Homo sapiens (Human), this protein is WD repeat-containing protein 13 (WDR13).